The sequence spans 1083 residues: RecBCD enzyme subunit RecB (1083 aa).

Residues 1 to 323 (MKVFDLLGPL…QTLGTNWRSD (323 aa)) form the UvrD-like helicase ATP-binding domain. The tract at residues 1 to 704 (MKVFDLLGPL…RGRAPGEAIV (704 aa)) is DNA-binding and helicase activity, interacts with RecC. 21-28 (ASAGTGKT) provides a ligand contact to ATP. The UvrD-like helicase C-terminal domain occupies 349–607 (VQARHQGHRL…QIMTVWVSKG (259 aa)). A nuclease activity, interacts with RecD and RecA region spans residues 765 to 1083 (AWKRTSYSGL…LSKLLDAEAP (319 aa)). Mg(2+) contacts are provided by H830, D962, and D975. The For nuclease activity role is filled by D975.

It belongs to the helicase family. UvrD subfamily. In terms of assembly, heterotrimer of RecB, RecC and RecD. All subunits contribute to DNA-binding. Interacts with RecA. Mg(2+) serves as cofactor.

The catalysed reaction is Exonucleolytic cleavage (in the presence of ATP) in either 5'- to 3'- or 3'- to 5'-direction to yield 5'-phosphooligonucleotides.. It catalyses the reaction Couples ATP hydrolysis with the unwinding of duplex DNA by translocating in the 3'-5' direction.. The enzyme catalyses ATP + H2O = ADP + phosphate + H(+). Its function is as follows. A helicase/nuclease that prepares dsDNA breaks (DSB) for recombinational DNA repair. Binds to DSBs and unwinds DNA via a highly rapid and processive ATP-dependent bidirectional helicase activity. Holoenzyme degrades any linearized DNA that is unable to undergo homologous recombination. In the holoenzyme this subunit contributes DNA-dependent ATPase activity, exonuclease activity and 3'-5' helicase activity. Unlike the case in E.coli, suppresses RecA-dependent homologous recombination, is instead required for single-strand annealing pathway repair of DSB. The chain is RecBCD enzyme subunit RecB from Mycolicibacterium smegmatis (strain ATCC 700084 / mc(2)155) (Mycobacterium smegmatis).